The chain runs to 1065 residues: Tubulin glycylase 3C (1065 aa).

6 disordered regions span residues 1–146 (MSSL…REDK), 158–182 (IREQKEVNLESQTEQSDHSNVTKSK), 301–326 (STQKQLVRASSAEGDKEKDDKKDIAK), 341–360 (EKKRQEIAKEEEEKKKKEQL), 381–482 (FFVD…GNGS), and 708–755 (NKQK…EKQM). Over residues 23–53 (QEGNQEDLNNQNDHNLNNNELDSLSSPPSDN) the composition is skewed to low complexity. The span at 54-63 (YNEEEFEQED) shows a compositional bias: acidic residues. Polar residues predominate over residues 73–92 (QNASQNNISQTQRISQTQLP). A compositionally biased stretch (basic and acidic residues) spans 122–146 (LMEKKKKEQEEKEKKELKLKKREDK). Over residues 166 to 179 (LESQTEQSDHSNVT) the composition is skewed to polar residues. Over residues 313 to 326 (EGDKEKDDKKDIAK) the composition is skewed to basic and acidic residues. Basic and acidic residues predominate over residues 385–403 (VPEKKPKKEKKKNESKEDN). Polar residues predominate over residues 404–423 (IQITSPKLNSTKSLSSQITR). A compositionally biased stretch (basic and acidic residues) spans 424–450 (KTNDAKKVEKLPKIKDSNKENHSKERN). Acidic residues predominate over residues 451-479 (EDNEEGDDGEYECDEGDEGASDGEDEDDG). The region spanning 633-1009 (YFEKDPDIEK…DYGMEKSKKA (377 aa)) is the TTL domain. Over residues 709–721 (KQKPKKKKKKSKK) the composition is skewed to basic residues. Positions 722-733 (DKQQGDTEKKEE) are enriched in basic and acidic residues. The span at 734–754 (EEGEAEDEEEDEEDEEEEEKQ) shows a compositional bias: acidic residues. ATP contacts are provided by residues 821 to 824 (QKYI), Lys-834, and Asp-836.

The protein resides in the cell projection. It is found in the cilium. It localises to the cytoplasm. Its subcellular location is the cytoskeleton. The protein localises to the cilium axoneme. In terms of biological role, probable glycylase which modifies tubulin, generating side chains of glycine on the gamma-carboxyl groups of specific glutamate residues within the C-terminal tail of tubulin. In Tetrahymena thermophila (strain SB210), this protein is Tubulin glycylase 3C (TTLL3C).